The primary structure comprises 136 residues: Small ribosomal subunit protein uS19 (136 aa).

The disordered stretch occupies residues 114–136 (RSRVSHGSAGVGATRSSKFVPLK).

It belongs to the universal ribosomal protein uS19 family.

Protein S19 forms a complex with S13 that binds strongly to the 16S ribosomal RNA. The chain is Small ribosomal subunit protein uS19 from Methanosarcina barkeri (strain Fusaro / DSM 804).